The chain runs to 419 residues: uncharacterized protein (419 aa).

The next 11 helical transmembrane spans lie at 1–21, 24–44, 66–86, 101–121, 174–194, 216–236, 242–262, 280–300, 311–331, 349–369, and 396–416; these read MTTVSAIGALVALIVAIFLIL, VSPAYGMLVGALVGGLIGGAD, ILAAGVLAGVLIESGAANSIT, ALALATMILTAVGVFVDVAVI, SVMMAGIIPALFGLILTYFLA, NLPSFLTALVAPLVAILLLAL, IKVDPLIALPLGGLIGAFCMG, PVAIMLLGTGALAGIIANSGL, SGLPSYILAPISGVLMSLATA, LELGVSSLAGAAMIHAGATVF, and IPYESAVGLMMTIVSTLIFGV.

This sequence belongs to the CitM (TC 2.A.11) transporter family.

Its subcellular location is the cell membrane. This is an uncharacterized protein from Haemophilus influenzae (strain ATCC 51907 / DSM 11121 / KW20 / Rd).